We begin with the raw amino-acid sequence, 157 residues long: Holo-[acyl-carrier-protein] synthase (157 aa).

The Mg(2+) site is built by D8 and E59.

This sequence belongs to the P-Pant transferase superfamily. AcpS family. Mg(2+) is required as a cofactor.

It localises to the cytoplasm. It carries out the reaction apo-[ACP] + CoA = holo-[ACP] + adenosine 3',5'-bisphosphate + H(+). Transfers the 4'-phosphopantetheine moiety from coenzyme A to a Ser of acyl-carrier-protein. The polypeptide is Holo-[acyl-carrier-protein] synthase (Gluconobacter oxydans (strain 621H) (Gluconobacter suboxydans)).